Reading from the N-terminus, the 158-residue chain is MKTFLILAMAVALAKAQSTDEITNLVQFGKLVMCLGNIGYTEGLEYDGYGCFCGKGGKGTPVDATDRCCEVHDNCYGQAVEEGKCWSVETYGTTYWYDQSTSGSCSIRCWEEGDYNSLVPRKACKAAICECDRKAAQCFADNRPTFNRKYLNYAKDTC.

Residues 1–16 (MKTFLILAMAVALAKA) form the signal peptide. A propeptide spanning residues 17–23 (QSTDEIT) is cleaved from the precursor. 6 disulfides stabilise this stretch: Cys-51-Cys-158, Cys-53-Cys-69, Cys-68-Cys-138, Cys-75-Cys-131, Cys-85-Cys-124, and Cys-109-Cys-129. Ca(2+)-binding residues include Gly-54 and Gly-56. Residue His-72 is part of the active site. Asp-73 contributes to the Ca(2+) binding site. Residue Asp-132 is part of the active site.

This sequence belongs to the phospholipase A2 family. Group I subfamily. Monomer. It depends on Ca(2+) as a cofactor. In terms of tissue distribution, expressed by the venom gland.

Its subcellular location is the secreted. The catalysed reaction is a 1,2-diacyl-sn-glycero-3-phosphocholine + H2O = a 1-acyl-sn-glycero-3-phosphocholine + a fatty acid + H(+). In terms of biological role, starfish phospholipase A2 (PLA2) that has hemorrhagic and capillary permeability-increasing activities and hence is considered to be deeply involved in the local inflammation. Shows hemolytic activity only in the presence of phosphatidylcholine (PC). PLA2 catalyzes the calcium-dependent hydrolysis of the 2-acyl groups in 3-sn-phosphoglycerides. This chain is Phospholipase A2 AP-PLA2-II, found in Acanthaster planci (Crown-of-thorns starfish).